Consider the following 245-residue polypeptide: Lytic switch protein BZLF1 (245 aa).

Residues 1 to 167 (MMDPNSTSED…RTRKPQQPES (167 aa)) are transactivation. 2 positions are modified to phosphothreonine; by host: Thr-14 and Thr-159. The Bipartite nuclear localization signal motif lies at 157–194 (RRTRKPQQPESLEECDSELEIKRYKNRVASRKCRAKFK). 3 positions are modified to phosphoserine; by host: Ser-167, Ser-173, and Ser-186. Residues 170 to 228 (ECDSELEIKRYKNRVASRKCRAKFKQLLQHYREVAAAKSSENDRLRLLLKQMCPSLDVD) form the bZIP domain. A basic motif region spans residues 178–195 (KRYKNRVASRKCRAKFKQ). The interval 196 to 228 (LLQHYREVAAAKSSENDRLRLLLKQMCPSLDVD) is leucine-zipper. The tract at residues 229–245 (SIIPRTPDVLHEDLLNF) is accessory activation domain.

Belongs to the bZIP family. As to quaternary structure, homodimer. Interacts (via b-ZIP domain) with the DNA polymerase processivity factor BMRF1 (via N-terminus); this interaction may inhibit BZLF1-induced transcription of the BMRF1 promoter. Interacts with human UBN1, CRTC2 and RACK1. Interacts (via N-terminus) with human PAX5 (via N-terminus); this interaction inhibits BZLF1-mediated lytic viral reactivation. Interacts (via leucine-zipper domain) with host CEBPA; this interaction induces G1 host cell cycle arrest. Interacts (via C-terminus) with host TP53BP1 (via C-terminus); this interaction is involved in the activation of the viral lytic cycle. Interacts with host chromatin-remodeling ATPase INO80; this interaction participates to the activation of early lytic viral genes by BZLF1. Interacts with host regulator of chromatin SMARCA5/hSNF2H; this interaction participates to the activation of early lytic viral genes by BZLF1. Interacts with host PLSCR1/Phospholipid scramblase 1; this interaction negatively regulates the transcriptional regulatory activity of BZLF1 by preventing the formation of the BZLF1-CBP complex.

The protein resides in the host nucleus. Functionally, transcription factor that acts as a molecular switch to induce the transition from the latent to the lytic or productive phase of the virus cycle. Mediates the switch from the latent to the lytic cycle of infection in cells containing a highly methylated viral genome. Probably binds to silenced chromatin and recruits host chromatin-remodeling enzymes. Regulates this switch by binding to 2 types of ZEBRA response elements (ZREs): the CpG-free AP-1 like elements (latency) and the methylated CpG-containing elements (lytic replication). Activates preferentially the methylated forms of the viral lytic R (BRLF1) and Na (BRRF1) gene promoters, the latters being the first genes activated during Z-mediated reactivation in latently infected cells. BZLF1 and BRLF1 act together to trigger lytic replication. Also binds the lytic origin of replication, oriLyt. Induces G1 cell cycle arrest by stabilizing the host CCAAT/enhancer binding protein CEBPA. This function is important because the lytic cycle preferentially takes place in host cells arrested in G1. The polypeptide is Lytic switch protein BZLF1 (Epstein-Barr virus (strain B95-8) (HHV-4)).